A 430-amino-acid polypeptide reads, in one-letter code: Adenylosuccinate synthetase (430 aa).

GTP is bound by residues 13–19 (GDEGKGK) and 41–43 (GHT). Aspartate 14 (proton acceptor) is an active-site residue. Mg(2+) is bound by residues aspartate 14 and glycine 41. Residues 14–17 (DEGK), 39–42 (NAGH), threonine 130, arginine 144, glutamine 225, threonine 240, and arginine 304 contribute to the IMP site. Residue histidine 42 is the Proton donor of the active site. Position 300–306 (300–306 (STTGRAR)) interacts with substrate. GTP contacts are provided by residues arginine 306, 332–334 (KLD), and 414–416 (STG).

The protein belongs to the adenylosuccinate synthetase family. As to quaternary structure, homodimer. Mg(2+) serves as cofactor.

Its subcellular location is the cytoplasm. The catalysed reaction is IMP + L-aspartate + GTP = N(6)-(1,2-dicarboxyethyl)-AMP + GDP + phosphate + 2 H(+). It functions in the pathway purine metabolism; AMP biosynthesis via de novo pathway; AMP from IMP: step 1/2. Functionally, plays an important role in the de novo pathway of purine nucleotide biosynthesis. Catalyzes the first committed step in the biosynthesis of AMP from IMP. In Pseudomonas putida (strain W619), this protein is Adenylosuccinate synthetase.